A 365-amino-acid chain; its full sequence is Spermine synthase (365 aa).

An N-acetylalanine modification is found at A2. Residue S57 is modified to Phosphoserine. The 241-residue stretch at 121 to 361 (RYWPTADGRL…ELWVFYTVWK (241 aa)) folds into the PABS domain. S-adenosyl 3-(methylsulfanyl)propylamine is bound at residue Q147. Residues Y176 and D200 each coordinate spermidine. Residues E219 and 254-255 (DC) each bind S-adenosyl 3-(methylsulfanyl)propylamine. D275 (proton acceptor) is an active-site residue. The spermidine site is built by Y350 and E352.

The protein belongs to the spermidine/spermine synthase family. As to quaternary structure, homodimer. Dimerization is mediated through the N-terminal domain and seems to be required for activity as deletion of the N-terminal domain causes complete loss of activity.

The enzyme catalyses S-adenosyl 3-(methylsulfanyl)propylamine + spermidine = spermine + S-methyl-5'-thioadenosine + H(+). It participates in amine and polyamine biosynthesis; spermine biosynthesis; spermine from spermidine: step 1/1. Its function is as follows. Catalyzes the production of spermine from spermidine and decarboxylated S-adenosylmethionine (dcSAM). This is Spermine synthase (SMS) from Bos taurus (Bovine).